The following is a 231-amino-acid chain: Putative cobalt transport protein CbiM 1 (231 aa).

6 helical membrane passes run Pro9 to Phe29, Val41 to Pro61, Gly74 to Leu94, Thr107 to Tyr127, Val135 to Val155, and Val181 to Phe201.

Belongs to the CbiM family. Forms an energy-coupling factor (ECF) transporter complex composed of an ATP-binding protein (A component, CbiO), a transmembrane protein (T component, CbiQ) and 2 possible substrate-capture proteins (S components, CbiM and CbiN) of unknown stoichimetry.

Its subcellular location is the cell membrane. The protein operates within cofactor biosynthesis; adenosylcobalamin biosynthesis. Its function is as follows. Part of the energy-coupling factor (ECF) transporter complex CbiMNOQ involved in cobalt import. The polypeptide is Putative cobalt transport protein CbiM 1 (Methanosarcina barkeri (strain Fusaro / DSM 804)).